Here is a 1179-residue protein sequence, read N- to C-terminus: Protein turtle homolog A (1179 aa).

Positions 1–20 (MVWCLGLAVLSLVISQGADG) are cleaved as a signal peptide. Residues 21–734 (RGKPEVVSVV…TQLPGLLPQP (714 aa)) are Extracellular-facing. Ig-like domains are found at residues 24 to 124 (PEVV…DFAN), 136 to 216 (PQFQ…GSAT), 226 to 318 (PPVI…AYLT), 322 to 410 (PAQV…SPVT), and 418 to 502 (PAFI…TNVY). 5 disulfide bridges follow: cysteine 41/cysteine 108, cysteine 158/cysteine 206, cysteine 248/cysteine 301, cysteine 344/cysteine 395, and cysteine 440/cysteine 486. N-linked (GlcNAc...) asparagine glycosylation is found at asparagine 188 and asparagine 256. 2 consecutive Fibronectin type-III domains span residues 507-611 (SPHV…TTPA) and 623-718 (PLSP…TSGL). 2 N-linked (GlcNAc...) asparagine glycosylation sites follow: asparagine 513 and asparagine 524. Residues 606–626 (LPTTPAAPGLPPTEIPPPLSP) are disordered. Pro residues predominate over residues 613–626 (PGLPPTEIPPPLSP). A helical transmembrane segment spans residues 735-755 (VLAGVVGGVCFLGVAVLVSIL). Residues 756-1179 (AGCLLNRRRA…VPHPEQATLL (424 aa)) lie on the Cytoplasmic side of the membrane. Disordered stretches follow at residues 767 to 919 (RRRR…PLPG), 940 to 988 (DWPP…VVGA), and 1015 to 1079 (AAPR…KRRN). The span at 785–800 (GKSAAPSALGSGSPDS) shows a compositional bias: low complexity. The residue at position 809 (serine 809) is a Phosphoserine. Pro residues-rich tracts occupy residues 826-836 (TPSPHPDPPSS) and 906-919 (VAPP…PLPG). Threonine 972 bears the Phosphothreonine mark. The PDZ-binding signature appears at 1177–1179 (TLL).

It belongs to the immunoglobulin superfamily. Turtle family. Interacts with MAGI2 and SHANK1.

It is found in the cell membrane. Its subcellular location is the synapse. Functions in dendrite outgrowth and synapse maturation. This Homo sapiens (Human) protein is Protein turtle homolog A (IGSF9).